Here is a 432-residue protein sequence, read N- to C-terminus: Competence protein ComFA (432 aa).

Residues Cys-40, Cys-43, Cys-60, and Cys-63 each contribute to the Zn(2+) site. Residues 107–257 (LQAVDKQKPT…RLGELKRLNL (151 aa)) enclose the Helicase ATP-binding domain. 120 to 127 (AVTGAGKT) is a binding site for ATP. The short motif at 205–208 (DEVD) is the DEAD box element. A Helicase C-terminal domain is found at 289 to 432 (KLKSYIEKQR…IQMMNKEAGL (144 aa)).

This sequence belongs to the DEAD box helicase family. Monomer and dimer in solution. Interacts with DprA and ComFC; ComFA-ComFC form rings about 150 Angstroms in diameter with apparent 6-fold symmetry. Zn(2+) is required as a cofactor.

It is found in the cytoplasm. Functionally, involved in transformation (genetic competence for DNA uptake). DNA uptake is energy dependent, this protein may provide the driving force for DNA uptake. Does not have helicase activity, translocates on single-stranded (ss)DNA in a 5'-3' direction in an ATP-dependent manner, but does not unwind double-stranded (ds)DNA (tested with 5'- and 3'-overhang dsDNA). ATP hydrolysis causes the release of ssDNA from ComFA. A ssDNA-stimulated ATPase; dsDNA does not stimulate ATPase. ATP hydrolysis causes the release of ssDNA from ComFA. ComFC has no effect on ATPase activity. Binds ssDNA but only very poorly to dsDNA in the absence of ATP. Binding to ssDNA does not require free DNA ends. In Streptococcus pneumoniae (strain ATCC BAA-255 / R6), this protein is Competence protein ComFA.